The following is a 120-amino-acid chain: Large ribosomal subunit protein uL18 (120 aa).

Belongs to the universal ribosomal protein uL18 family. Part of the 50S ribosomal subunit; part of the 5S rRNA/L5/L18/L25 subcomplex. Contacts the 5S and 23S rRNAs.

Its function is as follows. This is one of the proteins that bind and probably mediate the attachment of the 5S RNA into the large ribosomal subunit, where it forms part of the central protuberance. The sequence is that of Large ribosomal subunit protein uL18 from Gluconacetobacter diazotrophicus (strain ATCC 49037 / DSM 5601 / CCUG 37298 / CIP 103539 / LMG 7603 / PAl5).